The primary structure comprises 233 residues: Glucosamine-6-phosphate deaminase (233 aa).

Residue aspartate 62 is the Proton acceptor; for enolization step of the active site. Residue asparagine 128 is the For ring-opening step of the active site. Catalysis depends on histidine 130, which acts as the Proton acceptor; for ring-opening step. Glutamate 135 acts as the For ring-opening step in catalysis.

Belongs to the glucosamine/galactosamine-6-phosphate isomerase family. NagB subfamily.

The enzyme catalyses alpha-D-glucosamine 6-phosphate + H2O = beta-D-fructose 6-phosphate + NH4(+). The protein operates within amino-sugar metabolism; N-acetylneuraminate degradation; D-fructose 6-phosphate from N-acetylneuraminate: step 5/5. Its function is as follows. Catalyzes the reversible isomerization-deamination of glucosamine 6-phosphate (GlcN6P) to form fructose 6-phosphate (Fru6P) and ammonium ion. The protein is Glucosamine-6-phosphate deaminase of Streptococcus thermophilus (strain ATCC BAA-491 / LMD-9).